Consider the following 309-residue polypeptide: Homoserine O-succinyltransferase (309 aa).

Catalysis depends on Cys142, which acts as the Acyl-thioester intermediate. Lys163 and Ser192 together coordinate substrate. Residue His235 is the Proton acceptor of the active site. Glu237 is an active-site residue. Arg249 contacts substrate.

It belongs to the MetA family.

The protein localises to the cytoplasm. It catalyses the reaction L-homoserine + succinyl-CoA = O-succinyl-L-homoserine + CoA. It participates in amino-acid biosynthesis; L-methionine biosynthesis via de novo pathway; O-succinyl-L-homoserine from L-homoserine: step 1/1. Transfers a succinyl group from succinyl-CoA to L-homoserine, forming succinyl-L-homoserine. This is Homoserine O-succinyltransferase from Yersinia pseudotuberculosis serotype O:1b (strain IP 31758).